The primary structure comprises 184 residues: Photosystem I assembly protein Ycf4 (184 aa).

2 consecutive transmembrane segments (helical) span residues 22-42 and 57-77; these read FCWA…GTSS and IIFF…LFIS.

Belongs to the Ycf4 family.

The protein resides in the plastid. It is found in the chloroplast thylakoid membrane. Functionally, seems to be required for the assembly of the photosystem I complex. In Draba nemorosa (Woodland whitlowgrass), this protein is Photosystem I assembly protein Ycf4.